Here is a 147-residue protein sequence, read N- to C-terminus: Small ribosomal subunit protein uS12 (147 aa).

This sequence belongs to the universal ribosomal protein uS12 family. Part of the 30S ribosomal subunit.

Its function is as follows. With S4 and S5 plays an important role in translational accuracy. Located at the interface of the 30S and 50S subunits. This is Small ribosomal subunit protein uS12 from Pyrococcus horikoshii (strain ATCC 700860 / DSM 12428 / JCM 9974 / NBRC 100139 / OT-3).